The chain runs to 291 residues: uncharacterized protein (291 aa).

Residues 5–19 (AFIGLGVMGFPMAGH) and Thr97 each bind NAD(+). Lys172 is an active-site residue. Residue Lys240 participates in NAD(+) binding.

This sequence belongs to the HIBADH-related family.

This is an uncharacterized protein from Shewanella frigidimarina (strain NCIMB 400).